The primary structure comprises 190 residues: Glutathione peroxidase 2 (190 aa).

Sec-40 is an active-site residue. Sec-40 is a non-standard amino acid (selenocysteine).

Belongs to the glutathione peroxidase family. As to quaternary structure, homotetramer. In terms of tissue distribution, exclusively expressed in the stomach and small intestine.

It localises to the cytoplasm. It is found in the cytosol. It catalyses the reaction 2 glutathione + H2O2 = glutathione disulfide + 2 H2O. The catalysed reaction is a hydroperoxy polyunsaturated fatty acid + 2 glutathione = a hydroxy polyunsaturated fatty acid + glutathione disulfide + H2O. The enzyme catalyses tert-butyl hydroperoxide + 2 glutathione = tert-butanol + glutathione disulfide + H2O. It carries out the reaction cumene hydroperoxide + 2 glutathione = 2-phenylpropan-2-ol + glutathione disulfide + H2O. It catalyses the reaction (13S)-hydroperoxy-(9Z,11E)-octadecadienoate + 2 glutathione = (13S)-hydroxy-(9Z,11E)-octadecadienoate + glutathione disulfide + H2O. The catalysed reaction is (5S)-hydroperoxy-(6E,8Z,11Z,14Z)-eicosatetraenoate + 2 glutathione = (5S)-hydroxy-(6E,8Z,11Z,14Z)-eicosatetraenoate + glutathione disulfide + H2O. The enzyme catalyses (12R)-hydroperoxy-(5Z,8Z,10E,14Z)-eicosatetraenoate + 2 glutathione = (12R)-hydroxy-(5Z,8Z,10E,14Z)-eicosatetraenoate + glutathione disulfide + H2O. It carries out the reaction (15S)-hydroperoxy-(5Z,8Z,11Z,13E)-eicosatetraenoate + 2 glutathione = (15S)-hydroxy-(5Z,8Z,11Z,13E)-eicosatetraenoate + glutathione disulfide + H2O. Catalyzes the reduction of hydroperoxides in a glutathione-dependent manner thus regulating cellular redox homeostasis. Can reduce small soluble hydroperoxides such as H2O2, cumene hydroperoxide and tert-butyl hydroperoxide, as well as several fatty acid-derived hydroperoxides. Cannot reduce phosphatidycholine hydroperoxide. The polypeptide is Glutathione peroxidase 2 (GPX2) (Macaca fuscata fuscata (Japanese macaque)).